The following is a 325-amino-acid chain: DNA-directed RNA polymerase subunit alpha (325 aa).

The tract at residues 1–231 (MQTSLLKPKI…DQLSVFAALE (231 aa)) is alpha N-terminal domain (alpha-NTD). Residues 246–325 (IDPILLRPVD…ENWPPAGLDK (80 aa)) form an alpha C-terminal domain (alpha-CTD) region.

This sequence belongs to the RNA polymerase alpha chain family. As to quaternary structure, homodimer. The RNAP catalytic core consists of 2 alpha, 1 beta, 1 beta' and 1 omega subunit. When a sigma factor is associated with the core the holoenzyme is formed, which can initiate transcription.

It carries out the reaction RNA(n) + a ribonucleoside 5'-triphosphate = RNA(n+1) + diphosphate. Its function is as follows. DNA-dependent RNA polymerase catalyzes the transcription of DNA into RNA using the four ribonucleoside triphosphates as substrates. This chain is DNA-directed RNA polymerase subunit alpha, found in Burkholderia multivorans (strain ATCC 17616 / 249).